The following is a 416-amino-acid chain: D-amino acid dehydrogenase (416 aa).

3 to 17 (ITILGSGVIGVTTAY) is an FAD binding site.

It belongs to the DadA oxidoreductase family. FAD serves as cofactor.

It catalyses the reaction a D-alpha-amino acid + A + H2O = a 2-oxocarboxylate + AH2 + NH4(+). Functionally, oxidative deamination of D-amino acids. This Brucella suis biovar 1 (strain 1330) protein is D-amino acid dehydrogenase.